The primary structure comprises 571 residues: Urease subunit alpha (571 aa).

Positions 132 to 571 constitute a Urease domain; it reads GAIDTHIHFI…LPMGQKYFLF (440 aa). Ni(2+)-binding residues include His-137, His-139, and Lys-220. An N6-carboxylysine modification is found at Lys-220. His-222 lines the substrate pocket. Residues His-249 and His-275 each coordinate Ni(2+). Catalysis depends on His-323, which acts as the Proton donor. Asp-363 is a binding site for Ni(2+).

The protein belongs to the metallo-dependent hydrolases superfamily. Urease alpha subunit family. Heterotrimer of UreA (gamma), UreB (beta) and UreC (alpha) subunits. Three heterotrimers associate to form the active enzyme. Ni cation is required as a cofactor. In terms of processing, carboxylation allows a single lysine to coordinate two nickel ions.

The protein resides in the cytoplasm. It carries out the reaction urea + 2 H2O + H(+) = hydrogencarbonate + 2 NH4(+). The protein operates within nitrogen metabolism; urea degradation; CO(2) and NH(3) from urea (urease route): step 1/1. This Corynebacterium urealyticum (strain ATCC 43042 / DSM 7109) protein is Urease subunit alpha.